The following is a 227-amino-acid chain: MIGILAGMGPKSTSPFIDKVIDYCQKLYGASNDIDYPHMMIYSCPTPFYADRPIDHDEMKKAIIDGAVKLEKTGVDFIALPCNTAHVYYEEIQQALSVPMLHIVEETIKEIPHPAKKAVVLGTEPTIQSAIYQKVLKGNGQEVIHKDHWQQAVNQLIAAIKQPNHMQHTQALWQTLYEEISQHADIIISACTDLNAVLDHIQSEIPIIDSSACLAKSTVSTYLAYQS.

Substrate is bound at residue 51-53 (DRP). Cysteine 82 serves as the catalytic Proton donor/acceptor. Substrate is bound by residues 83 to 85 (NTA) and lysine 161. Residue cysteine 191 is the Proton donor/acceptor of the active site.

It belongs to the aspartate/glutamate racemases family. In terms of assembly, homodimer.

It catalyses the reaction an L-alpha-amino acid = a D-alpha-amino acid. The catalysed reaction is (2S,6S)-2,6-diaminopimelate = meso-2,6-diaminopimelate. The enzyme catalyses L-lysine = D-lysine. It carries out the reaction L-arginine = D-arginine. It catalyses the reaction L-ornithine = D-ornithine. The catalysed reaction is L-histidine = D-histidine. The enzyme catalyses L-alanine = D-alanine. It carries out the reaction L-tyrosine = D-tyrosine. It catalyses the reaction L-phenylalanine = D-phenylalanine. The catalysed reaction is L-serine = D-serine. The enzyme catalyses L-glutamine = D-glutamine. It carries out the reaction L-methionine = D-methionine. It catalyses the reaction L-asparagine = D-asparagine. The catalysed reaction is L-homoserine = D-homoserine. In terms of biological role, amino-acid racemase able to utilize a broad range of substrates. Preferentially catalyzes the epimerization of LL-diaminopimelate, as well as the racemization of D-lysine, L-arginine, L-ornithine, L-lysine and D-arginine. Has lower activity against D-ornithine, L-histidine, L-alanine, L-tyrosine, L-phenylalanine, L-serine, L-glutamine, L-methionine, L-asparagine and L-homoserine. Has weak activity against L-norleucine, L-aminobutyric acid and L-norvaline. Has no activity toward nine L-amino acids (Thr, Glu, Asp, Val, Leu, Ile, Trp, Cit and Aad). D-amino acids might be used as components of peptidoglycan and/or be involved in peptidoglycan metabolism and remodeling. The polypeptide is Broad specificity amino-acid racemase RacX (racX) (Bacillus subtilis (strain 168)).